A 579-amino-acid polypeptide reads, in one-letter code: A-type ATP synthase subunit A (579 aa).

229–236 (GPFGSGKT) provides a ligand contact to ATP.

Belongs to the ATPase alpha/beta chains family. As to quaternary structure, has multiple subunits with at least A(3), B(3), C, D, E, F, H, I and proteolipid K(x).

The protein resides in the cell membrane. It catalyses the reaction ATP + H2O + 4 H(+)(in) = ADP + phosphate + 5 H(+)(out). Functionally, component of the A-type ATP synthase that produces ATP from ADP in the presence of a proton gradient across the membrane. The A chain is the catalytic subunit. This is A-type ATP synthase subunit A from Methanocella arvoryzae (strain DSM 22066 / NBRC 105507 / MRE50).